Here is a 156-residue protein sequence, read N- to C-terminus: Small ribosomal subunit protein uS7 (156 aa).

Belongs to the universal ribosomal protein uS7 family. Part of the 30S ribosomal subunit. Contacts proteins S9 and S11.

One of the primary rRNA binding proteins, it binds directly to 16S rRNA where it nucleates assembly of the head domain of the 30S subunit. Is located at the subunit interface close to the decoding center, probably blocks exit of the E-site tRNA. The sequence is that of Small ribosomal subunit protein uS7 from Dehalococcoides mccartyi (strain ATCC BAA-2100 / JCM 16839 / KCTC 5957 / BAV1).